A 309-amino-acid chain; its full sequence is Olfactory receptor 8U9 (309 aa).

Topologically, residues 1 to 28 (MTQINCTQVTEFILVGLTDRQELKMPLF) are extracellular. Asparagine 5 carries an N-linked (GlcNAc...) asparagine glycan. Residues 29–49 (VLFLSIYLFTVVGNLGLILLI) traverse the membrane as a helical segment. Residues 50–56 (RTDEKLN) lie on the Cytoplasmic side of the membrane. Residues 57–77 (TPMYFFLSNLAFVDFCYSSVI) traverse the membrane as a helical segment. Topologically, residues 78 to 97 (TPKMLGNFLYKQNSISFNAC) are extracellular. A disulfide bridge connects residues cysteine 97 and cysteine 179. A helical transmembrane segment spans residues 98 to 118 (AAQLGCFLAFMTAECLLLASM). The Cytoplasmic portion of the chain corresponds to 119 to 143 (AYDRYVAICNPLMYMVVMSPGICIQ). The helical transmembrane segment at 144–164 (LVAAPHSYSILVALFHTILTF) threads the bilayer. Topologically, residues 165–204 (RLSYCHSNIVNHFYCDDMPLLRLTCSDTRFKQLWIFACAG) are extracellular. The chain crosses the membrane as a helical span at residues 205 to 225 (IMFISSLLIVFVSYMFIISAI). The Cytoplasmic segment spans residues 226-239 (LRMHSAEGRQKAFS). The chain crosses the membrane as a helical span at residues 240–260 (TCGSHMLAVTIFYGTLIFMYL). At 261–272 (QPSSSHALDTDK) the chain is on the extracellular side. The chain crosses the membrane as a helical span at residues 273-293 (MASVFYTVIIPMLNPLIYSLQ). Topologically, residues 294–309 (NKEVKEALKKIIINKN) are cytoplasmic.

This sequence belongs to the G-protein coupled receptor 1 family.

Its subcellular location is the cell membrane. Odorant receptor. The chain is Olfactory receptor 8U9 (OR8U9) from Homo sapiens (Human).